We begin with the raw amino-acid sequence, 157 residues long: MKLSHLDEKNHPKMVDVSDKNITSRMATASGVIYMSQEAFDVIKNNTAKKGPVLQTAIVAAIMGAKKTSEIIPMCHPLMLSKIETDIVEFVKECAFKLIVTVKCEGKTGVEMEALSGVSIGLLTIYDMIKAIDKSMRITDIVLESKEGGKSGKFVRY.

Residues 74–76 (MCH) and 112–113 (ME) each bind substrate. Residue D127 is part of the active site.

Belongs to the MoaC family. As to quaternary structure, homohexamer; trimer of dimers.

The catalysed reaction is (8S)-3',8-cyclo-7,8-dihydroguanosine 5'-triphosphate = cyclic pyranopterin phosphate + diphosphate. It participates in cofactor biosynthesis; molybdopterin biosynthesis. In terms of biological role, catalyzes the conversion of (8S)-3',8-cyclo-7,8-dihydroguanosine 5'-triphosphate to cyclic pyranopterin monophosphate (cPMP). The chain is Cyclic pyranopterin monophosphate synthase from Campylobacter jejuni subsp. doylei (strain ATCC BAA-1458 / RM4099 / 269.97).